A 154-amino-acid polypeptide reads, in one-letter code: SsrA-binding protein (154 aa).

A disordered region spans residues 126–154 (GKKKYDKREDMKKKEAQREVERAFRERQK). Basic and acidic residues predominate over residues 131–154 (DKREDMKKKEAQREVERAFRERQK).

The protein belongs to the SmpB family.

It is found in the cytoplasm. In terms of biological role, required for rescue of stalled ribosomes mediated by trans-translation. Binds to transfer-messenger RNA (tmRNA), required for stable association of tmRNA with ribosomes. tmRNA and SmpB together mimic tRNA shape, replacing the anticodon stem-loop with SmpB. tmRNA is encoded by the ssrA gene; the 2 termini fold to resemble tRNA(Ala) and it encodes a 'tag peptide', a short internal open reading frame. During trans-translation Ala-aminoacylated tmRNA acts like a tRNA, entering the A-site of stalled ribosomes, displacing the stalled mRNA. The ribosome then switches to translate the ORF on the tmRNA; the nascent peptide is terminated with the 'tag peptide' encoded by the tmRNA and targeted for degradation. The ribosome is freed to recommence translation, which seems to be the essential function of trans-translation. In Anoxybacillus flavithermus (strain DSM 21510 / WK1), this protein is SsrA-binding protein.